Reading from the N-terminus, the 439-residue chain is tRNA-2-methylthio-N(6)-dimethylallyladenosine synthase (439 aa).

An MTTase N-terminal domain is found at 2 to 119 (KKLYLKTHGC…LPDLLDSVIQ (118 aa)). C11, C48, C82, C156, C160, and C163 together coordinate [4Fe-4S] cluster. The Radical SAM core domain maps to 142 to 374 (RAEGPSAFVS…QNRINAKAAE (233 aa)). Residues 377–439 (QSMVGTQQRI…RPYSLWGEIC (63 aa)) enclose the TRAM domain.

The protein belongs to the methylthiotransferase family. MiaB subfamily. In terms of assembly, monomer. It depends on [4Fe-4S] cluster as a cofactor.

Its subcellular location is the cytoplasm. It catalyses the reaction N(6)-dimethylallyladenosine(37) in tRNA + (sulfur carrier)-SH + AH2 + 2 S-adenosyl-L-methionine = 2-methylsulfanyl-N(6)-dimethylallyladenosine(37) in tRNA + (sulfur carrier)-H + 5'-deoxyadenosine + L-methionine + A + S-adenosyl-L-homocysteine + 2 H(+). In terms of biological role, catalyzes the methylthiolation of N6-(dimethylallyl)adenosine (i(6)A), leading to the formation of 2-methylthio-N6-(dimethylallyl)adenosine (ms(2)i(6)A) at position 37 in tRNAs that read codons beginning with uridine. This chain is tRNA-2-methylthio-N(6)-dimethylallyladenosine synthase, found in Coxiella burnetii (strain CbuK_Q154) (Coxiella burnetii (strain Q154)).